Here is a 322-residue protein sequence, read N- to C-terminus: tRNA U34 carboxymethyltransferase (322 aa).

Residues K91, W105, K110, G129, 179–180, M195, Y199, and R314 each bind carboxy-S-adenosyl-L-methionine; that span reads LE.

The protein belongs to the class I-like SAM-binding methyltransferase superfamily. CmoB family. Homotetramer.

The enzyme catalyses carboxy-S-adenosyl-L-methionine + 5-hydroxyuridine(34) in tRNA = 5-carboxymethoxyuridine(34) in tRNA + S-adenosyl-L-homocysteine + H(+). In terms of biological role, catalyzes carboxymethyl transfer from carboxy-S-adenosyl-L-methionine (Cx-SAM) to 5-hydroxyuridine (ho5U) to form 5-carboxymethoxyuridine (cmo5U) at position 34 in tRNAs. In Pseudomonas aeruginosa (strain ATCC 15692 / DSM 22644 / CIP 104116 / JCM 14847 / LMG 12228 / 1C / PRS 101 / PAO1), this protein is tRNA U34 carboxymethyltransferase.